The sequence spans 90 residues: Large ribosomal subunit protein bL27 (90 aa).

Positions 1-22 (MAHKKSGGSSSNGRDSAGRRLG) are disordered.

The protein belongs to the bacterial ribosomal protein bL27 family.

This Caulobacter sp. (strain K31) protein is Large ribosomal subunit protein bL27.